A 199-amino-acid chain; its full sequence is Streptomycin biosynthesis protein StrG (199 aa).

The protein operates within antibiotic biosynthesis; streptomycin biosynthesis. Its function is as follows. May be involved in the formation of N-methyl-L-glucosamine. The chain is Streptomycin biosynthesis protein StrG (strG) from Streptomyces griseus.